A 92-amino-acid chain; its full sequence is Muconolactone Delta-isomerase (92 aa).

This sequence belongs to the muconolactone Delta-isomerase family. In terms of assembly, homodecamer.

It carries out the reaction (S)-muconolactone = (4,5-dihydro-5-oxofuran-2-yl)-acetate. It functions in the pathway aromatic compound metabolism; beta-ketoadipate pathway; 5-oxo-4,5-dihydro-2-furylacetate from catechol: step 3/3. This is Muconolactone Delta-isomerase (catC) from Cupriavidus pinatubonensis (strain JMP 134 / LMG 1197) (Cupriavidus necator (strain JMP 134)).